The primary structure comprises 261 residues: 3-methyl-2-oxobutanoate hydroxymethyltransferase (261 aa).

Mg(2+)-binding residues include Asp-42 and Asp-81. 3-methyl-2-oxobutanoate-binding positions include 42–43 (DS), Asp-81, and Lys-110. Position 112 (Glu-112) interacts with Mg(2+). The active-site Proton acceptor is the Glu-179.

The protein belongs to the PanB family. Homodecamer; pentamer of dimers. Requires Mg(2+) as cofactor.

It localises to the cytoplasm. The catalysed reaction is 3-methyl-2-oxobutanoate + (6R)-5,10-methylene-5,6,7,8-tetrahydrofolate + H2O = 2-dehydropantoate + (6S)-5,6,7,8-tetrahydrofolate. It functions in the pathway cofactor biosynthesis; coenzyme A biosynthesis. In terms of biological role, catalyzes the reversible reaction in which hydroxymethyl group from 5,10-methylenetetrahydrofolate is transferred onto alpha-ketoisovalerate to form ketopantoate. This Pyrobaculum islandicum (strain DSM 4184 / JCM 9189 / GEO3) protein is 3-methyl-2-oxobutanoate hydroxymethyltransferase.